The sequence spans 550 residues: Chaperonin GroEL (550 aa).

ATP-binding positions include 30–33, Lys51, 87–91, Gly415, 479–481, and Asp495; these read TLGP, DGTTT, and NAA. A disordered region spans residues 525–550; it reads PKDEKSSSELNSAPGNGMGGGMGGMM. Residues 540–550 are compositionally biased toward gly residues; it reads NGMGGGMGGMM.

It belongs to the chaperonin (HSP60) family. In terms of assembly, forms a cylinder of 14 subunits composed of two heptameric rings stacked back-to-back. Interacts with the co-chaperonin GroES.

It localises to the cytoplasm. The catalysed reaction is ATP + H2O + a folded polypeptide = ADP + phosphate + an unfolded polypeptide.. In terms of biological role, together with its co-chaperonin GroES, plays an essential role in assisting protein folding. The GroEL-GroES system forms a nano-cage that allows encapsulation of the non-native substrate proteins and provides a physical environment optimized to promote and accelerate protein folding. The sequence is that of Chaperonin GroEL from Buchnera aphidicola subsp. Cinara cedri (strain Cc).